We begin with the raw amino-acid sequence, 107 residues long: Ribonuclease P protein component 4 (107 aa).

Positions 62, 65, 87, and 90 each coordinate Zn(2+).

Belongs to the eukaryotic/archaeal RNase P protein component 4 family. Consists of a catalytic RNA component and at least 4-5 protein subunits. Zn(2+) is required as a cofactor.

The protein localises to the cytoplasm. It catalyses the reaction Endonucleolytic cleavage of RNA, removing 5'-extranucleotides from tRNA precursor.. Part of ribonuclease P, a protein complex that generates mature tRNA molecules by cleaving their 5'-ends. This chain is Ribonuclease P protein component 4, found in Archaeoglobus fulgidus (strain ATCC 49558 / DSM 4304 / JCM 9628 / NBRC 100126 / VC-16).